A 399-amino-acid chain; its full sequence is Forkhead box protein I3 (399 aa).

Disordered stretches follow at residues 87–109, 221–287, and 307–353; these read AGAQRGFAQPSASAPASPAGSAA, KRRR…ASTL, and SSSS…STVG. Positions 96–109 are enriched in low complexity; it reads PSASAPASPAGSAA. Phosphoserine is present on residues Ser-99 and Ser-103. Residues 129-223 constitute a DNA-binding region (fork-head); it reads RPPYSYSALI…DNGNFRRKRR (95 aa). The Nuclear localization signal signature appears at 219-225; sequence RRKRRRR. 2 stretches are compositionally biased toward polar residues: residues 228 to 248 and 258 to 267; these read ASSNLTVPSGTSKSEGQSSRL and SPSSILRPSQ. A phosphoserine mark is found at Ser-258, Ser-266, and Ser-268. Polar residues-rich tracts occupy residues 275–287, 307–317, and 328–353; these read TKSTASSPGASTL, SSSSMGNQRTL, and QLPSSTFPNTSVPDSSPDSMQLSTVG. Positions 385–393 match the 9aaTAD motif; it reads SMVNSLIYP.

In terms of processing, phosphorylation promotes the transcription factor activity. Dephosphorylation by protein phosphatase 2A (PP2A) reduces its activity. Specifically expressed in the epithelium in developing ectodermal appendages. Expressed in pharyngeal endoderm and ectoderm. Expressed in pre-placodal ectoderm. Down-regulated as the otic placode is induced. Expressed in teeth and hair follicles throughout embryogenesis. Expressed in mammary glands only during the earliest stages of development.

The protein localises to the nucleus. In terms of biological role, transcription factor required for pharyngeal arch development, which is involved in hair, ear, jaw and dental development. May act as a pioneer transcription factor during pharyngeal arch development. Required for epithelial cell differentiation within the epidermis. Acts at multiple stages of otic placode induction: necessary for preplacodal ectoderm to execute an inner ear program. Required for hair follicle stem cell specification. Acts downstream of TBX1 for the formation of the thymus and parathyroid glands from the third pharyngeal pouch. The sequence is that of Forkhead box protein I3 from Mus musculus (Mouse).